The primary structure comprises 115 residues: MPKANNAVAAKARRKRVLKKAKGYWGSRGNVLTVVKHAVDKAEQYAYRDRRAKKRTFRALWIMRINAAARLNGTTYSRLVDAMNKKSVEIDRKAMAEIAVKDPEAFTTLVKAIID.

Belongs to the bacterial ribosomal protein bL20 family.

Binds directly to 23S ribosomal RNA and is necessary for the in vitro assembly process of the 50S ribosomal subunit. It is not involved in the protein synthesizing functions of that subunit. The polypeptide is Large ribosomal subunit protein bL20 (Chlorobium phaeovibrioides (strain DSM 265 / 1930) (Prosthecochloris vibrioformis (strain DSM 265))).